The sequence spans 74 residues: Translation initiation factor IF-1 (74 aa).

Residues 1–72 form the S1-like domain; the sequence is MAKQDAIEME…TKGRITYRLR (72 aa).

This sequence belongs to the IF-1 family. As to quaternary structure, component of the 30S ribosomal translation pre-initiation complex which assembles on the 30S ribosome in the order IF-2 and IF-3, IF-1 and N-formylmethionyl-tRNA(fMet); mRNA recruitment can occur at any time during PIC assembly.

The protein resides in the cytoplasm. In terms of biological role, one of the essential components for the initiation of protein synthesis. Stabilizes the binding of IF-2 and IF-3 on the 30S subunit to which N-formylmethionyl-tRNA(fMet) subsequently binds. Helps modulate mRNA selection, yielding the 30S pre-initiation complex (PIC). Upon addition of the 50S ribosomal subunit IF-1, IF-2 and IF-3 are released leaving the mature 70S translation initiation complex. This chain is Translation initiation factor IF-1, found in Acaryochloris marina (strain MBIC 11017).